Consider the following 249-residue polypeptide: MKLTRKMVLSRAKASELHNVRKLNCWGSQLTDISICREMPSLEVITLSVNSVSTLEPVRSCRRLSELYLRRNRIPSLNELFYLKDLPHLRVLWLAENPCCGTSPHLYRMTVLRNLPHLQKLDNQAVTEEELTRALMEGDEITAAPHREGAGNGCPKPPYALNSVSSATETSQHLLSYTEETEVQGQTTTDQSPSFSPRDTMRSHKNRNILTAILLLLRELDTEGLETVQQTVGSRLQALHRPEPQEDME.

3 LRR repeats span residues Asn19–Pro40, Ser41–Arg62, and Arg63–Lys84. The region spanning Asn97 to Glu137 is the LRRCT domain. The tract at residues His146–Ser203 is disordered. Residues Asn162–Leu175 show a composition bias toward polar residues.

As to quaternary structure, found in a complex with CFAP410, NEK1 and SPATA7. Interacts with NEK1. As to expression, expressed in the retina.

It localises to the cell projection. The protein localises to the cilium. The protein resides in the cytoplasm. It is found in the cytoskeleton. Its subcellular location is the cilium basal body. It localises to the mitochondrion. The protein localises to the photoreceptor outer segment. Functionally, plays a role in cilia formation and/or maintenance. Plays a role in the regulation of cell morphology and cytoskeletal organization. Involved in DNA damage repair. This is Cilia- and flagella-associated protein 410 from Mus musculus (Mouse).